The sequence spans 348 residues: MLILGFESSCDETGVALVAADHGERPRLLAHALHSQVAMHEAYGGVVPELASRDHIRRALPLTRQVLAEAGRALADVDVVAYTRGPGLAGALLVGSAVACALAAALDRPVLGIHHLEGHLLSPFLSVDPPQFPFVALLVSGGHTQLMRVDGVGDYALLGETIDDAAGEAFDKSAKLLGLGYPGGPALARLAEFGDPTAYALPRPLLHRDTLDFSFAGLKTAVRTQVLKLGEGVCEQPRADLAAATQAAIVEVLVKKSLAALRATRLQRLVVAGGVGANRSLRSQLDAACAKRGVRVHYPEVSLCTDNGAMIALAAAMRLQAGRATARRDHAFDVQPRWPLAALDVGVP.

Fe cation is bound by residues H115 and H119. Substrate contacts are provided by residues 138–142 (LVSGG), D171, G184, and N278. Residue D306 participates in Fe cation binding.

The protein belongs to the KAE1 / TsaD family. Requires Fe(2+) as cofactor.

It is found in the cytoplasm. The enzyme catalyses L-threonylcarbamoyladenylate + adenosine(37) in tRNA = N(6)-L-threonylcarbamoyladenosine(37) in tRNA + AMP + H(+). In terms of biological role, required for the formation of a threonylcarbamoyl group on adenosine at position 37 (t(6)A37) in tRNAs that read codons beginning with adenine. Is involved in the transfer of the threonylcarbamoyl moiety of threonylcarbamoyl-AMP (TC-AMP) to the N6 group of A37, together with TsaE and TsaB. TsaD likely plays a direct catalytic role in this reaction. This Methylibium petroleiphilum (strain ATCC BAA-1232 / LMG 22953 / PM1) protein is tRNA N6-adenosine threonylcarbamoyltransferase.